A 133-amino-acid chain; its full sequence is Ribonuclease VapC29 (133 aa).

The region spanning 3 to 122 (VLLDANVLIA…TLDSGLAHLH (120 aa)) is the PINc domain. Residues Asp-6 and Asp-97 each contribute to the Mg(2+) site.

The protein belongs to the PINc/VapC protein family. Mg(2+) is required as a cofactor.

Functionally, toxic component of a type II toxin-antitoxin (TA) system. Its cognate antitoxin is VapB29. Has ribonuclease activity. In Mycobacterium tuberculosis (strain CDC 1551 / Oshkosh), this protein is Ribonuclease VapC29.